Reading from the N-terminus, the 274-residue chain is Penicillin-insensitive murein endopeptidase (274 aa).

Positions 1 to 19 are cleaved as a signal peptide; sequence MKKTAIALLAWFVSSASLA. Intrachain disulfides connect C44–C265, C187–C235, and C216–C223. Positions 110, 113, 120, 147, 150, and 211 each coordinate Zn(2+). A disordered region spans residues 225–274; that stretch reads DQPLPPPGDGCGAELQSWFEPPKPGTTKPEKKTPPPLPPSCQALLDEHVL.

Belongs to the peptidase M74 family. As to quaternary structure, dimer. Requires Zn(2+) as cofactor.

The protein resides in the periplasm. Murein endopeptidase that cleaves the D-alanyl-meso-2,6-diamino-pimelyl amide bond that connects peptidoglycan strands. Likely plays a role in the removal of murein from the sacculus. The chain is Penicillin-insensitive murein endopeptidase from Salmonella choleraesuis (strain SC-B67).